The primary structure comprises 114 residues: Beta-microseminoprotein (114 aa).

The first 20 residues, 1–20, serve as a signal peptide directing secretion; the sequence is MNVLLGSVVIFATFVTLCNA. 5 disulfides stabilise this stretch: Cys-22/Cys-70, Cys-38/Cys-62, Cys-57/Cys-93, Cys-60/Cys-69, and Cys-84/Cys-107.

It belongs to the beta-microseminoprotein family. In terms of assembly, homodimer; Interacts with PI16. In terms of tissue distribution, strongly expressed in prostate, liver, kidney, breast and penis. Also expressed in pancreas, esophagus, stomach, deodenum, colon, trachea, lung, salivary glands and fallopian tube. PSP94 is expressed in lung and breast, whereas PSP57 is found in kidney and bladder.

It is found in the secreted. In Homo sapiens (Human), this protein is Beta-microseminoprotein (MSMB).